We begin with the raw amino-acid sequence, 307 residues long: UDP-N-acetylenolpyruvoylglucosamine reductase (307 aa).

In terms of domain architecture, FAD-binding PCMH-type spans 34–199; the sequence is RVGGPAQVLF…TAVRFRGTPS (166 aa). Arginine 179 is an active-site residue. Serine 228 serves as the catalytic Proton donor. Glutamate 298 is a catalytic residue.

Belongs to the MurB family. The cofactor is FAD.

The protein localises to the cytoplasm. The catalysed reaction is UDP-N-acetyl-alpha-D-muramate + NADP(+) = UDP-N-acetyl-3-O-(1-carboxyvinyl)-alpha-D-glucosamine + NADPH + H(+). Its pathway is cell wall biogenesis; peptidoglycan biosynthesis. In terms of biological role, cell wall formation. This Bradyrhizobium sp. (strain ORS 278) protein is UDP-N-acetylenolpyruvoylglucosamine reductase.